We begin with the raw amino-acid sequence, 220 residues long: Guanylate kinase (220 aa).

A Guanylate kinase-like domain is found at 15–194 (GLMLVISSPS…AFDAVQSIVK (180 aa)). 22 to 29 (SPSGAGKS) contributes to the ATP binding site.

Belongs to the guanylate kinase family.

It localises to the cytoplasm. It catalyses the reaction GMP + ATP = GDP + ADP. Its function is as follows. Essential for recycling GMP and indirectly, cGMP. The protein is Guanylate kinase of Rhizobium etli (strain ATCC 51251 / DSM 11541 / JCM 21823 / NBRC 15573 / CFN 42).